A 353-amino-acid chain; its full sequence is Holliday junction branch migration complex subunit RuvB (353 aa).

Residues 4–185 (ADRLITAVGG…FGIVQRLEFY (182 aa)) are large ATPase domain (RuvB-L). ATP contacts are provided by residues isoleucine 24, arginine 25, glycine 66, lysine 69, threonine 70, threonine 71, 132–134 (EDF), arginine 175, tyrosine 185, and arginine 222. Threonine 70 is a Mg(2+) binding site. Residues 186–256 (NIADLSTIVA…TADKALNLLD (71 aa)) are small ATPAse domain (RuvB-S). The segment at 259 to 353 (EHGFDHQDRR…GEFVDDAADL (95 aa)) is head domain (RuvB-H). Positions 295, 314, and 319 each coordinate DNA.

This sequence belongs to the RuvB family. Homohexamer. Forms an RuvA(8)-RuvB(12)-Holliday junction (HJ) complex. HJ DNA is sandwiched between 2 RuvA tetramers; dsDNA enters through RuvA and exits via RuvB. An RuvB hexamer assembles on each DNA strand where it exits the tetramer. Each RuvB hexamer is contacted by two RuvA subunits (via domain III) on 2 adjacent RuvB subunits; this complex drives branch migration. In the full resolvosome a probable DNA-RuvA(4)-RuvB(12)-RuvC(2) complex forms which resolves the HJ.

It localises to the cytoplasm. The catalysed reaction is ATP + H2O = ADP + phosphate + H(+). Functionally, the RuvA-RuvB-RuvC complex processes Holliday junction (HJ) DNA during genetic recombination and DNA repair, while the RuvA-RuvB complex plays an important role in the rescue of blocked DNA replication forks via replication fork reversal (RFR). RuvA specifically binds to HJ cruciform DNA, conferring on it an open structure. The RuvB hexamer acts as an ATP-dependent pump, pulling dsDNA into and through the RuvAB complex. RuvB forms 2 homohexamers on either side of HJ DNA bound by 1 or 2 RuvA tetramers; 4 subunits per hexamer contact DNA at a time. Coordinated motions by a converter formed by DNA-disengaged RuvB subunits stimulates ATP hydrolysis and nucleotide exchange. Immobilization of the converter enables RuvB to convert the ATP-contained energy into a lever motion, pulling 2 nucleotides of DNA out of the RuvA tetramer per ATP hydrolyzed, thus driving DNA branch migration. The RuvB motors rotate together with the DNA substrate, which together with the progressing nucleotide cycle form the mechanistic basis for DNA recombination by continuous HJ branch migration. Branch migration allows RuvC to scan DNA until it finds its consensus sequence, where it cleaves and resolves cruciform DNA. This Pseudomonas syringae pv. tomato (strain ATCC BAA-871 / DC3000) protein is Holliday junction branch migration complex subunit RuvB.